Reading from the N-terminus, the 162-residue chain is Caveolin-2 (162 aa).

The Cytoplasmic segment spans residues 1–86 (MGLETEKTDV…FEISKYVMYK (86 aa)). Tyrosine 19 is modified (phosphotyrosine; by SRC). Phosphoserine is present on residues serine 20 and serine 23. Tyrosine 27 carries the post-translational modification Phosphotyrosine; by SRC. Phosphoserine is present on serine 36. Residues 87-107 (FLTVFLAIPLAFLAGILFATL) constitute an intramembrane region (helical). Residues 108-162 (SCLHIWIIMPFVKTCLMVLPSVQTIWKSVTDAIVAPLCTSIGRSFSSVSLQLSQD) lie on the Cytoplasmic side of the membrane.

It belongs to the caveolin family. Monomer or homodimer. Interacts with CAV1; the interaction forms a stable heterooligomeric complex that is required for targeting to lipid rafts and for caveolae formation. Tyrosine phosphorylated forms do not form heterooligomers with the Tyr-19-phosphorylated form existing as a monomer or dimer, and the Tyr-27-form as a monomer only. Interacts (tyrosine phosphorylated form) with the SH2 domain-containing proteins, RASA1, NCK1 and SRC. Interacts (tyrosine phosphorylated form) with INSR, the interaction (Tyr-27-phosphorylated form) is increased on insulin stimulation. Interacts (Tyr-19 phosphorylated form) with MAPK1 (phosphorylated form); the interaction, promoted by insulin, leads to nuclear location and MAPK1 activation. Interacts with STAT3; the interaction is increased on insulin-induced tyrosine phosphorylation leading to STAT activation. Phosphorylated on serine and tyrosine residues. CAV1 promotes phosphorylation on Ser-23 which then targets the complex to the plasma membrane, lipid rafts and caveolae. Phosphorylation on Ser-36 appears to modulate mitosis in endothelial cells. Phosphorylation on both Tyr-19 and Tyr-27 is required for insulin-induced 'Ser-727' phosphorylation of STAT3 and its activation. Phosphorylation on Tyr-19 is required for insulin-induced phosphorylation of MAPK1 and DNA binding of STAT3. Tyrosine phosphorylation is induced by both EGF and insulin (By. similarity).

Its subcellular location is the nucleus. It is found in the cytoplasm. The protein localises to the golgi apparatus membrane. It localises to the cell membrane. The protein resides in the membrane. Its subcellular location is the caveola. Its function is as follows. May act as a scaffolding protein within caveolar membranes. Interacts directly with G-protein alpha subunits and can functionally regulate their activity. Acts as an accessory protein in conjunction with CAV1 in targeting to lipid rafts and driving caveolae formation. The Ser-36 phosphorylated form has a role in modulating mitosis in endothelial cells. Positive regulator of cellular mitogenesis of the MAPK signaling pathway. Required for the insulin-stimulated nuclear translocation and activation of MAPK1 and STAT3, and the subsequent regulation of cell cycle progression. The chain is Caveolin-2 (CAV2) from Aotus nancymaae (Ma's night monkey).